The following is a 314-amino-acid chain: Inactive chitinase-like protein 1 (314 aa).

Residues Met1–Ala19 form the signal peptide. One can recognise a Chitin-binding type-1 domain in the interval Glu20–Gly60. 7 cysteine pairs are disulfide-bonded: Cys22-Cys37, Cys31-Cys43, Cys36-Cys50, Cys54-Cys58, Cys92-Cys154, Cys166-Cys174, and Cys273-Cys305.

It belongs to the glycosyl hydrolase 19 family. Chitinase class I subfamily.

Functionally, inactive chitinase-like protein that does not exhibit hydrolytic activity toward chitin. Binds strongly to chitin and possesses antifungal activity toward the fungal pathogen Altenaria alternata in plate assays. Inhibits the growth of Fusarium oxysporum on plate assays. Probably involved in defense against fungal pathogens through a mechanism that only involves carbohydrate binding. The sequence is that of Inactive chitinase-like protein 1 from Hevea brasiliensis (Para rubber tree).